The sequence spans 450 residues: Tubulin alpha chain (450 aa).

Residue Q11 coordinates GTP. K40 carries the N6-acetyllysine modification. GTP is bound by residues E71, S140, G144, T145, T179, N206, and N228. E71 serves as a coordination point for Mg(2+). Residue E254 is part of the active site.

This sequence belongs to the tubulin family. As to quaternary structure, dimer of alpha and beta chains. A typical microtubule is a hollow water-filled tube with an outer diameter of 25 nm and an inner diameter of 15 nM. Alpha-beta heterodimers associate head-to-tail to form protofilaments running lengthwise along the microtubule wall with the beta-tubulin subunit facing the microtubule plus end conferring a structural polarity. Microtubules usually have 13 protofilaments but different protofilament numbers can be found in some organisms and specialized cells. The cofactor is Mg(2+). Post-translationally, acetylation of alpha chains at Lys-40 stabilizes microtubules and affects affinity and processivity of microtubule motors. This modification has a role in multiple cellular functions, ranging from cell motility, cell cycle progression or cell differentiation to intracellular trafficking and signaling.

Its subcellular location is the cytoplasm. It is found in the cytoskeleton. It catalyses the reaction GTP + H2O = GDP + phosphate + H(+). Tubulin is the major constituent of microtubules, a cylinder consisting of laterally associated linear protofilaments composed of alpha- and beta-tubulin heterodimers. Microtubules grow by the addition of GTP-tubulin dimers to the microtubule end, where a stabilizing cap forms. Below the cap, tubulin dimers are in GDP-bound state, owing to GTPase activity of alpha-tubulin. The chain is Tubulin alpha chain from Euplotes vannus (Marine ciliate).